The chain runs to 69 residues: Neurotoxin Cex5 (69 aa).

Residue Ala-1 is a signal peptide. Positions 2–67 (KDGYLVSKST…TYPIPGKSCG (66 aa)) constitute an LCN-type CS-alpha/beta domain. Cystine bridges form between Cys-13–Cys-66, Cys-17–Cys-42, Cys-26–Cys-47, and Cys-30–Cys-49. Cys-66 is modified (cysteine amide). Residues 67–69 (GKK) constitute a propeptide that is removed on maturation.

It belongs to the long (4 C-C) scorpion toxin superfamily. Sodium channel inhibitor family. Beta subfamily. In terms of tissue distribution, expressed by the venom gland.

It localises to the secreted. In terms of biological role, beta toxins bind voltage-independently at site-4 of sodium channels (Nav) and shift the voltage of activation toward more negative potentials thereby affecting sodium channel activation and promoting spontaneous and repetitive firing. In Centruroides exilicauda (Bark scorpion), this protein is Neurotoxin Cex5.